The sequence spans 209 residues: Uracil phosphoribosyltransferase (209 aa).

5-phospho-alpha-D-ribose 1-diphosphate contacts are provided by residues arginine 79, arginine 104, and 131–139; that span reads DPMLATGGS. Residues valine 194 and 199-201 contribute to the uracil site; that span reads GDA. Aspartate 200 serves as a coordination point for 5-phospho-alpha-D-ribose 1-diphosphate.

The protein belongs to the UPRTase family. Requires Mg(2+) as cofactor.

It catalyses the reaction UMP + diphosphate = 5-phospho-alpha-D-ribose 1-diphosphate + uracil. It participates in pyrimidine metabolism; UMP biosynthesis via salvage pathway; UMP from uracil: step 1/1. With respect to regulation, allosterically activated by GTP. Catalyzes the conversion of uracil and 5-phospho-alpha-D-ribose 1-diphosphate (PRPP) to UMP and diphosphate. The sequence is that of Uracil phosphoribosyltransferase from Bacillus cereus (strain Q1).